A 351-amino-acid chain; its full sequence is Transaldolase (351 aa).

Lys138 (schiff-base intermediate with substrate) is an active-site residue.

This sequence belongs to the transaldolase family. Type 2 subfamily.

The protein localises to the cytoplasm. It catalyses the reaction D-sedoheptulose 7-phosphate + D-glyceraldehyde 3-phosphate = D-erythrose 4-phosphate + beta-D-fructose 6-phosphate. It functions in the pathway carbohydrate degradation; pentose phosphate pathway; D-glyceraldehyde 3-phosphate and beta-D-fructose 6-phosphate from D-ribose 5-phosphate and D-xylulose 5-phosphate (non-oxidative stage): step 2/3. Functionally, transaldolase is important for the balance of metabolites in the pentose-phosphate pathway. This Neisseria meningitidis serogroup C / serotype 2a (strain ATCC 700532 / DSM 15464 / FAM18) protein is Transaldolase.